A 100-amino-acid polypeptide reads, in one-letter code: U12-ctenitoxin-Pn1a (100 aa).

An N-terminal signal peptide occupies residues 1–28; that stretch reads MKYRIFKMKYTLLFLSVIALVHIFAVEA. Positions 29-41 are excised as a propeptide; sequence KDEPESDALVPQE. 5 disulfides stabilise this stretch: cysteine 44/cysteine 58, cysteine 51/cysteine 64, cysteine 57/cysteine 82, cysteine 66/cysteine 80, and cysteine 90/cysteine 97.

Belongs to the neurotoxin 09 (Tx3-6) family. In terms of tissue distribution, expressed by the venom gland.

The protein resides in the secreted. Probable neurotoxin. In Phoneutria nigriventer (Brazilian armed spider), this protein is U12-ctenitoxin-Pn1a.